Reading from the N-terminus, the 333-residue chain is Phosphate acyltransferase (333 aa).

Belongs to the PlsX family. In terms of assembly, homodimer. Probably interacts with PlsY.

The protein resides in the cytoplasm. The enzyme catalyses a fatty acyl-[ACP] + phosphate = an acyl phosphate + holo-[ACP]. The protein operates within lipid metabolism; phospholipid metabolism. Functionally, catalyzes the reversible formation of acyl-phosphate (acyl-PO(4)) from acyl-[acyl-carrier-protein] (acyl-ACP). This enzyme utilizes acyl-ACP as fatty acyl donor, but not acyl-CoA. This Lactobacillus helveticus (strain DPC 4571) protein is Phosphate acyltransferase.